Reading from the N-terminus, the 102-residue chain is Large ribosomal subunit protein bL21 (102 aa).

It belongs to the bacterial ribosomal protein bL21 family. As to quaternary structure, part of the 50S ribosomal subunit. Contacts protein L20.

Its function is as follows. This protein binds to 23S rRNA in the presence of protein L20. This chain is Large ribosomal subunit protein bL21, found in Phytoplasma mali (strain AT).